The chain runs to 268 residues: Tryptophan synthase alpha chain (268 aa).

Residues glutamate 49 and aspartate 60 each act as proton acceptor in the active site.

It belongs to the TrpA family. Tetramer of two alpha and two beta chains.

The enzyme catalyses (1S,2R)-1-C-(indol-3-yl)glycerol 3-phosphate + L-serine = D-glyceraldehyde 3-phosphate + L-tryptophan + H2O. It functions in the pathway amino-acid biosynthesis; L-tryptophan biosynthesis; L-tryptophan from chorismate: step 5/5. The alpha subunit is responsible for the aldol cleavage of indoleglycerol phosphate to indole and glyceraldehyde 3-phosphate. This is Tryptophan synthase alpha chain from Escherichia coli (strain 55989 / EAEC).